The sequence spans 101 residues: Putative fatty acid-binding protein 5-like protein 3 (101 aa).

Belongs to the calycin superfamily. Fatty-acid binding protein (FABP) family.

In terms of biological role, high specificity for fatty acids. This chain is Putative fatty acid-binding protein 5-like protein 3 (FABP5P3), found in Homo sapiens (Human).